We begin with the raw amino-acid sequence, 103 residues long: Pyrimidine/purine nucleoside phosphorylase (103 aa).

The protein belongs to the nucleoside phosphorylase PpnP family.

The enzyme catalyses a purine D-ribonucleoside + phosphate = a purine nucleobase + alpha-D-ribose 1-phosphate. The catalysed reaction is adenosine + phosphate = alpha-D-ribose 1-phosphate + adenine. It catalyses the reaction cytidine + phosphate = cytosine + alpha-D-ribose 1-phosphate. It carries out the reaction guanosine + phosphate = alpha-D-ribose 1-phosphate + guanine. The enzyme catalyses inosine + phosphate = alpha-D-ribose 1-phosphate + hypoxanthine. The catalysed reaction is thymidine + phosphate = 2-deoxy-alpha-D-ribose 1-phosphate + thymine. It catalyses the reaction uridine + phosphate = alpha-D-ribose 1-phosphate + uracil. It carries out the reaction xanthosine + phosphate = alpha-D-ribose 1-phosphate + xanthine. Catalyzes the phosphorolysis of diverse nucleosides, yielding D-ribose 1-phosphate and the respective free bases. Can use uridine, adenosine, guanosine, cytidine, thymidine, inosine and xanthosine as substrates. Also catalyzes the reverse reactions. The sequence is that of Pyrimidine/purine nucleoside phosphorylase from Shewanella frigidimarina (strain NCIMB 400).